Reading from the N-terminus, the 328-residue chain is Lipoyl synthase (328 aa).

[4Fe-4S] cluster contacts are provided by cysteine 57, cysteine 62, cysteine 68, cysteine 83, cysteine 87, cysteine 90, and serine 298. The 219-residue stretch at 69 to 287 (WSRGTATFML…REEGLSLGFL (219 aa)) folds into the Radical SAM core domain.

The protein belongs to the radical SAM superfamily. Lipoyl synthase family. Requires [4Fe-4S] cluster as cofactor.

The protein localises to the cytoplasm. The catalysed reaction is [[Fe-S] cluster scaffold protein carrying a second [4Fe-4S](2+) cluster] + N(6)-octanoyl-L-lysyl-[protein] + 2 oxidized [2Fe-2S]-[ferredoxin] + 2 S-adenosyl-L-methionine + 4 H(+) = [[Fe-S] cluster scaffold protein] + N(6)-[(R)-dihydrolipoyl]-L-lysyl-[protein] + 4 Fe(3+) + 2 hydrogen sulfide + 2 5'-deoxyadenosine + 2 L-methionine + 2 reduced [2Fe-2S]-[ferredoxin]. It functions in the pathway protein modification; protein lipoylation via endogenous pathway; protein N(6)-(lipoyl)lysine from octanoyl-[acyl-carrier-protein]: step 2/2. Its function is as follows. Catalyzes the radical-mediated insertion of two sulfur atoms into the C-6 and C-8 positions of the octanoyl moiety bound to the lipoyl domains of lipoate-dependent enzymes, thereby converting the octanoylated domains into lipoylated derivatives. The polypeptide is Lipoyl synthase (Deinococcus geothermalis (strain DSM 11300 / CIP 105573 / AG-3a)).